We begin with the raw amino-acid sequence, 130 residues long: Small ribosomal subunit protein uS8 (130 aa).

This sequence belongs to the universal ribosomal protein uS8 family. Part of the 30S ribosomal subunit. Contacts proteins S5 and S12.

Functionally, one of the primary rRNA binding proteins, it binds directly to 16S rRNA central domain where it helps coordinate assembly of the platform of the 30S subunit. This is Small ribosomal subunit protein uS8 from Buchnera aphidicola subsp. Baizongia pistaciae (strain Bp).